A 221-amino-acid polypeptide reads, in one-letter code: Guanylate kinase (221 aa).

The Guanylate kinase-like domain occupies 20-198 (GSLFMVVAPS…ALAELRTVVQ (179 aa)). ATP is bound at residue 27–34 (APSGAGKS).

The protein belongs to the guanylate kinase family.

The protein localises to the cytoplasm. The enzyme catalyses GMP + ATP = GDP + ADP. Its function is as follows. Essential for recycling GMP and indirectly, cGMP. This is Guanylate kinase from Ralstonia nicotianae (strain ATCC BAA-1114 / GMI1000) (Ralstonia solanacearum).